We begin with the raw amino-acid sequence, 370 residues long: Vasopressin V2 receptor (370 aa).

Positions 1 to 21 (MFMASTTSAVPWHLSQPTPAG) are enriched in polar residues. The interval 1 to 26 (MFMASTTSAVPWHLSQPTPAGNGSEG) is disordered. Over 1–38 (MFMASTTSAVPWHLSQPTPAGNGSEGELLTARDPLLAQ) the chain is Extracellular. Asn-22 carries an N-linked (GlcNAc...) asparagine glycan. A helical transmembrane segment spans residues 39–63 (AELALLSTVFVAVALSNGLVLGALV). Residues 64 to 77 (RRGRRGRWAPMHVF) are Cytoplasmic-facing. A helical transmembrane segment spans residues 78-98 (IGHLCLADLAVALFQVLPQLA). The Extracellular segment spans residues 99-113 (WDATDRFRGPDALCR). The chain crosses the membrane as a helical span at residues 114–135 (AVKYLQMVGMYASSYMILAMTL). Residues 136-159 (DRHRAICRPMLAHRHGGGTHWNRP) lie on the Cytoplasmic side of the membrane. The chain crosses the membrane as a helical span at residues 160–180 (VLLAWAFSLLFSLPQLFIFAQ). Topologically, residues 181-199 (RDVDGSGVLDCWARFAEPW) are extracellular. A helical membrane pass occupies residues 200 to 219 (GLRAYVTWIALMVFVAPALG). The Cytoplasmic segment spans residues 220-270 (IAACQVLIFREIHASLGPGPVPRAGGPRRGCRPGSPAEGARVSAAVAKTVK). A helical membrane pass occupies residues 271–292 (MTLVIVIVYVLCWAPFFLVQLW). The Extracellular portion of the chain corresponds to 293 to 307 (AAWDPEAPREGPPFV). The helical transmembrane segment at 308–327 (LLMLLASLNSCTNPWIYASF) threads the bilayer. Over 328–370 (SSSISSELRSLLCCTWRRAPPSPGPQEESCATASSFLAKDTPS) the chain is Cytoplasmic. Residues Cys-340 and Cys-341 are each lipidated (S-palmitoyl cysteine). Residues 347–370 (PPSPGPQEESCATASSFLAKDTPS) are disordered.

This sequence belongs to the G-protein coupled receptor 1 family. Vasopressin/oxytocin receptor subfamily. In terms of assembly, interacts with ARRDC4. Identified in a complex containing at least ARRDC4, V2R and HGS. Interacts with TMEM147.

It is found in the cell membrane. Its function is as follows. Receptor for arginine vasopressin. The activity of this receptor is mediated by G proteins which activate adenylate cyclase. Involved in renal water reabsorption. The chain is Vasopressin V2 receptor (AVPR2) from Bos taurus (Bovine).